We begin with the raw amino-acid sequence, 328 residues long: Serine/threonine protein kinase RdoA (328 aa).

Aspartate 201 acts as the Proton acceptor in catalysis. Mg(2+) is bound by residues asparagine 206 and aspartate 217. The active site involves aspartate 217.

It belongs to the SrkA/RdoA protein kinase family. Monomer. Mg(2+) serves as cofactor.

The protein resides in the cytoplasm. The enzyme catalyses L-seryl-[protein] + ATP = O-phospho-L-seryl-[protein] + ADP + H(+). The catalysed reaction is L-threonyl-[protein] + ATP = O-phospho-L-threonyl-[protein] + ADP + H(+). A protein kinase that (auto)phosphorylates on Ser and Thr residues, probably involved in the extracytoplasmic stress response. Probably acts to suppress the effects of stress linked to accumulation of reactive oxygen species. In Salmonella typhimurium (strain LT2 / SGSC1412 / ATCC 700720), this protein is Serine/threonine protein kinase RdoA.